Consider the following 342-residue polypeptide: Holliday junction branch migration complex subunit RuvB (342 aa).

The interval 1-185 is large ATPase domain (RuvB-L); that stretch reads MTVKPLRDVT…FPIQERLEYY (185 aa). ATP is bound by residues leucine 24, arginine 25, glycine 66, lysine 69, threonine 70, serine 71, 132–134, arginine 175, tyrosine 185, and arginine 222; that span reads EDY. Residue threonine 70 participates in Mg(2+) binding. Residues 186 to 256 form a small ATPAse domain (RuvB-S) region; sequence GPAELKEIAV…VVDRTLRRLE (71 aa). The interval 259–342 is head domain (RuvB-H); that stretch reads ARGLDAMDRR…RPGGKQGSLV (84 aa). DNA contacts are provided by arginine 314 and arginine 319.

The protein belongs to the RuvB family. In terms of assembly, homohexamer. Forms an RuvA(8)-RuvB(12)-Holliday junction (HJ) complex. HJ DNA is sandwiched between 2 RuvA tetramers; dsDNA enters through RuvA and exits via RuvB. An RuvB hexamer assembles on each DNA strand where it exits the tetramer. Each RuvB hexamer is contacted by two RuvA subunits (via domain III) on 2 adjacent RuvB subunits; this complex drives branch migration. In the full resolvosome a probable DNA-RuvA(4)-RuvB(12)-RuvC(2) complex forms which resolves the HJ.

The protein resides in the cytoplasm. The enzyme catalyses ATP + H2O = ADP + phosphate + H(+). The RuvA-RuvB-RuvC complex processes Holliday junction (HJ) DNA during genetic recombination and DNA repair, while the RuvA-RuvB complex plays an important role in the rescue of blocked DNA replication forks via replication fork reversal (RFR). RuvA specifically binds to HJ cruciform DNA, conferring on it an open structure. The RuvB hexamer acts as an ATP-dependent pump, pulling dsDNA into and through the RuvAB complex. RuvB forms 2 homohexamers on either side of HJ DNA bound by 1 or 2 RuvA tetramers; 4 subunits per hexamer contact DNA at a time. Coordinated motions by a converter formed by DNA-disengaged RuvB subunits stimulates ATP hydrolysis and nucleotide exchange. Immobilization of the converter enables RuvB to convert the ATP-contained energy into a lever motion, pulling 2 nucleotides of DNA out of the RuvA tetramer per ATP hydrolyzed, thus driving DNA branch migration. The RuvB motors rotate together with the DNA substrate, which together with the progressing nucleotide cycle form the mechanistic basis for DNA recombination by continuous HJ branch migration. Branch migration allows RuvC to scan DNA until it finds its consensus sequence, where it cleaves and resolves cruciform DNA. In Anaeromyxobacter sp. (strain K), this protein is Holliday junction branch migration complex subunit RuvB.